Reading from the N-terminus, the 374-residue chain is S-adenosylmethionine:tRNA ribosyltransferase-isomerase (374 aa).

This sequence belongs to the QueA family. As to quaternary structure, monomer.

The protein resides in the cytoplasm. It catalyses the reaction 7-aminomethyl-7-carbaguanosine(34) in tRNA + S-adenosyl-L-methionine = epoxyqueuosine(34) in tRNA + adenine + L-methionine + 2 H(+). Its pathway is tRNA modification; tRNA-queuosine biosynthesis. In terms of biological role, transfers and isomerizes the ribose moiety from AdoMet to the 7-aminomethyl group of 7-deazaguanine (preQ1-tRNA) to give epoxyqueuosine (oQ-tRNA). This Prochlorococcus marinus (strain MIT 9215) protein is S-adenosylmethionine:tRNA ribosyltransferase-isomerase.